The sequence spans 474 residues: tRNA-2-methylthio-N(6)-dimethylallyladenosine synthase (474 aa).

The MTTase N-terminal domain maps to 3–120 (KKLHIKTWGC…LPEMIEQIQQ (118 aa)). Positions 12, 49, 83, 157, 161, and 164 each coordinate [4Fe-4S] cluster. A Radical SAM core domain is found at 143-375 (RAEGPSAFVS…QDRITQQAMR (233 aa)). The 64-residue stretch at 378–441 (RQMLGTVQRI…TNSLRGKFIR (64 aa)) folds into the TRAM domain.

It belongs to the methylthiotransferase family. MiaB subfamily. In terms of assembly, monomer. [4Fe-4S] cluster serves as cofactor.

The protein localises to the cytoplasm. It catalyses the reaction N(6)-dimethylallyladenosine(37) in tRNA + (sulfur carrier)-SH + AH2 + 2 S-adenosyl-L-methionine = 2-methylsulfanyl-N(6)-dimethylallyladenosine(37) in tRNA + (sulfur carrier)-H + 5'-deoxyadenosine + L-methionine + A + S-adenosyl-L-homocysteine + 2 H(+). Functionally, catalyzes the methylthiolation of N6-(dimethylallyl)adenosine (i(6)A), leading to the formation of 2-methylthio-N6-(dimethylallyl)adenosine (ms(2)i(6)A) at position 37 in tRNAs that read codons beginning with uridine. In Shewanella loihica (strain ATCC BAA-1088 / PV-4), this protein is tRNA-2-methylthio-N(6)-dimethylallyladenosine synthase.